The chain runs to 480 residues: Pre-glycoprotein polyprotein GP complex (480 aa).

Glycine 2 is lipidated: N-myristoyl glycine; by host. The Extracellular segment spans residues 2–17; it reads GQLVSFFQEIPVFFQE. The helical transmembrane segment at 18 to 33 threads the bilayer; that stretch reads ALNIALAVVTLLAIVK. At 34-58 the chain is on the cytoplasmic side; the sequence is GVLNLWKSGLFQLLMFLILAGRSCS. Cysteine 57 is a Zn(2+) binding site. The Extracellular segment spans residues 59–419; the sequence is FRIGYHTSFE…QGRTPLTLVD (361 aa). Intrachain disulfides connect cysteine 85-cysteine 221, cysteine 266-cysteine 279, cysteine 288-cysteine 297, and cysteine 351-cysteine 372. Asparagine 88, asparagine 174, and asparagine 214 each carry an N-linked (GlcNAc...) asparagine; by host glycan. N-linked (GlcNAc...) asparagine; by host glycans are attached at residues asparagine 352, asparagine 360, asparagine 377, and asparagine 382. Residues 420–440 form a helical membrane-spanning segment; sequence LCFWSAVFYTTTLFLHLVGFP. Residues 441 to 480 are Cytoplasmic-facing; it reads THRHISGEPCPLPHRLNRHGACNCGRFKRLKKPLVWYKHH. Positions 442, 444, 450, 454, 462, 464, and 480 each coordinate Zn(2+).

It belongs to the arenaviridae GPC protein family. As to quaternary structure, interacts with glycoprotein G2. Part of the GP complex (GP-C) together with glycoprotein G1 and glycoprotein G2. The GP-complex interacts with protein Z, which interacts with ribonucleocapsid; these interactions may induce virion budding. Homotrimer; disulfide-linked. In pre-fusion state, G1 homotrimers bind G2 homotrimers via ionic interactions. Part of the GP complex (GP-C) together with glycoprotein G2 and the stable signal peptide. The GP-complex interacts with protein Z, which interacts with ribonucleocapsid; these interactions may induce virion budding. In terms of assembly, homotrimer. Interacts with the stable signal peptide. In pre-fusion state, G2 homotrimers bind G1 homotrimers via ionic interactions. Part of the GP complex (GP-C) together with glycoprotein G1 and the stable signal peptide. Acidification in the endosome triggers rearrangements, which ultimately leads to a 6 helix bundle formed by the two heptad repeat domains (HR1 and HR2) in post-fusion state. The GP-complex interacts with protein Z, which interacts with ribonucleocapsid; these interactions may induce virion budding. Specific enzymatic cleavages in vivo yield mature proteins. GP-C polyprotein is cleaved in the endoplasmic reticulum by the host protease MBTPS1. Only cleaved glycoprotein is incorporated into virions. In terms of processing, the SSP remains stably associated with the GP complex following cleavage by signal peptidase and plays crucial roles in the trafficking of GP through the secretory pathway. Post-translationally, myristoylation is necessary for GP2-mediated fusion activity.

Its subcellular location is the virion membrane. The protein resides in the host endoplasmic reticulum membrane. It is found in the host Golgi apparatus membrane. It localises to the host cell membrane. Functionally, functions as a cleaved signal peptide that is retained as the third component of the GP complex (GP-C). Helps to stabilize the spike complex in its native conformation. The SSP is required for efficient glycoprotein expression, post-translational maturation cleavage of G1 and G2, glycoprotein transport to the cell surface plasma membrane, formation of infectious virus particles, and acid pH-dependent glycoprotein-mediated cell fusion. Its function is as follows. Forms the virion spikes together with glycoprotein G2. The glycoprotein spike trimers are connected to the underlying matrix. Interacts with the host receptor leading to virus endocytosis. In terms of biological role, forms the virion spikes together with glycoprotein G1. The glycoprotein spike trimers are connected to the underlying matrix. Class I viral fusion protein that directs fusion of viral and host endosomal membranes, leading to delivery of the nucleocapsid into the cytoplasm. Membrane fusion is mediated by irreversible conformational changes induced by acidification. The protein is Pre-glycoprotein polyprotein GP complex of Cupixi mammarenavirus (isolate Rat/Brasil/BeAn 119303/1970) (CPXV).